We begin with the raw amino-acid sequence, 518 residues long: Cytochrome P450 monooxygenase ARMGADRAFT_1018417 (518 aa).

Residues 3–23 traverse the membrane as a helical segment; sequence LFSAYALAFSLLMIPLILYIL. Cys433 lines the heme pocket. Asn455 carries N-linked (GlcNAc...) asparagine glycosylation.

It belongs to the cytochrome P450 family. It depends on heme as a cofactor.

The protein localises to the membrane. It participates in secondary metabolite biosynthesis. In terms of biological role, cytochrome P450 monooxygenase, part of the gene cluster that mediates the biosynthesis of melleolides, a range of antifungal and phytotoxic polyketide derivatives composed of an orsellinic acid (OA) moiety esterified to various sesquiterpene alcohols. The first step in melleolides biosynthesis is performed by the delta(6)-protoilludene synthase PRO1 which catalyzes the cyclization of farnesyl diphosphate to protoilludene. The orsellinic acid synthase armB produces OA by condensing acetyl-CoA with 3 malonyl-CoA units in a three-round chain elongation reaction folowed by a C2-C7 ring closure. ArmB further catalyzes the trans-esterification of OA to the various sesquiterpene alcohols resulting from the hydroxylation of protoilludene. The melleolides cluster also includes 5 cytochrome P450 monooxygenases, 4 NAD(+)-dependent oxidoreductases, one flavin-dependent oxidoreductase, and one O-methyltransferase. The cytochrome P450 monooxygenases may be involved in protoilludene hydroxylation to elaborate melleolides with multiple alcohol groups, such as melleolide D, which carries alcohol functionalities at C-4, C-5, C-10, and C-13. The role of the NAD(+)-dependent enzymes remains unknown. Numerous melleolides, including arnamial, show 5'-O-methylation of the aromatic moiety which may be catalyzed by the methyltransferase encoded in the cluster. The flavin-dependent oxidoreductase might represent the dehydrogenase yielding the aldehyde in position 1 of arnamial and other melleolides. Finally, several halogenase localized outside of the cluster, are able to catalyze the transfer of a single chlorine atom to the melleolide backbone, resulting in a 6'-chloromelleolide product. In Armillaria gallica (Bulbous honey fungus), this protein is Cytochrome P450 monooxygenase ARMGADRAFT_1018417.